A 356-amino-acid polypeptide reads, in one-letter code: tRNA-specific 2-thiouridylase MnmA (356 aa).

ATP is bound by residues 8 to 15 and Met34; that span reads GMSGGVDS. Cys103 (nucleophile) is an active-site residue. A disulfide bridge connects residues Cys103 and Cys199. Gly127 is a binding site for ATP. The interval 149-151 is interaction with tRNA; sequence KDQ. Cys199 (cysteine persulfide intermediate) is an active-site residue. Residues 305–306 are interaction with tRNA; it reads RY.

Belongs to the MnmA/TRMU family.

The protein localises to the cytoplasm. It catalyses the reaction S-sulfanyl-L-cysteinyl-[protein] + uridine(34) in tRNA + AH2 + ATP = 2-thiouridine(34) in tRNA + L-cysteinyl-[protein] + A + AMP + diphosphate + H(+). Functionally, catalyzes the 2-thiolation of uridine at the wobble position (U34) of tRNA, leading to the formation of s(2)U34. In Clostridium kluyveri (strain ATCC 8527 / DSM 555 / NBRC 12016 / NCIMB 10680 / K1), this protein is tRNA-specific 2-thiouridylase MnmA.